The sequence spans 360 residues: Hyaluronan and proteoglycan link protein 3 (360 aa).

The N-terminal stretch at 1–17 (MGLLLLVPLLLLPGSYG) is a signal peptide. The Ig-like V-type domain occupies 48-164 (KLVVETPEET…ESGLVELELR (117 aa)). 5 cysteine pairs are disulfide-bonded: cysteine 70-cysteine 146, cysteine 188-cysteine 259, cysteine 212-cysteine 233, cysteine 286-cysteine 356, and cysteine 311-cysteine 332. 2 Link domains span residues 166 to 261 (VVFP…FCFA) and 266 to 358 (GRVY…YCYR).

Belongs to the HAPLN family. As to expression, widely expressed with highest levels in spleen and placenta.

It is found in the secreted. The protein localises to the extracellular space. The protein resides in the extracellular matrix. Its function is as follows. May function in hyaluronic acid binding. The protein is Hyaluronan and proteoglycan link protein 3 (HAPLN3) of Homo sapiens (Human).